We begin with the raw amino-acid sequence, 73 residues long: TGVESARDAYIAKPHNCVYECFDAFSSYCNDLCTENGAKSGYCQIAGKYGNGCWCIELPDNVPIRIPGKCHRR.

A signal peptide spans 1-5 (TGVES). An LCN-type CS-alpha/beta domain is found at 7–71 (RDAYIAKPHN…VPIRIPGKCH (65 aa)). Cystine bridges form between Cys17–Cys70, Cys21–Cys43, Cys29–Cys53, and Cys33–Cys55. Residues 72-73 (RR) constitute a propeptide, removed by a carboxypeptidase.

The protein belongs to the long (4 C-C) scorpion toxin superfamily. Sodium channel inhibitor family. Alpha subfamily. As to expression, expressed by the venom gland.

It localises to the secreted. Functionally, alpha toxins bind voltage-independently at site-3 of sodium channels (Nav) and inhibit the inactivation of the activated channels, thereby blocking neuronal transmission. In Mesobuthus eupeus (Lesser Asian scorpion), this protein is Sodium channel neurotoxin MeuNaTxalpha-13.